We begin with the raw amino-acid sequence, 244 residues long: MASLLGVLCGWGTRPEEQQYEMIRAAAPPSEAEPRLQEALAVVNALLPAPITLDDALESLDDTRRLVKARALARTYHACMVNLERLARHHPGLEGSTIDGAVAAHRDKMRRLADTCMATILQMYMSVGAADKSADVLVSQAIRSMAESDVVMEDVAIAERALGLSTSALAGGTRTAGLGATEAPPGPTRAQAPEVASVPVTHAGDRSPVRPGPVPPADPTPDPRHRTSAPKRQASSTEAPLLLA.

C9 is lipidated: S-palmitoyl cysteine; by host. Residues 175 to 244 (TAGLGATEAP…SSTEAPLLLA (70 aa)) are disordered. A compositionally biased stretch (pro residues) spans 210–220 (RPGPVPPADPT).

Belongs to the herpesviridae UL51 family. In terms of assembly, oligomerizes. Interacts with UL7; this interaction mediates UL7 incorporation to virions. Post-translationally, phosphorylated. In terms of processing, palmitoylation is necessary for Golgi localization.

Its subcellular location is the virion tegument. It is found in the host cytoplasm. It localises to the host Golgi apparatus. Its function is as follows. Plays several roles during the time course of infection, including egress of virus particles from the perinuclear space and secondary envelopment of cytoplasmic capsids that bud into specific trans-Golgi network (TGN)-derived membranes. This Human herpesvirus 2 (strain HG52) (HHV-2) protein is Tegument protein UL51.